A 196-amino-acid polypeptide reads, in one-letter code: UPF0301 protein BT_1078 (196 aa).

Belongs to the UPF0301 (AlgH) family.

The polypeptide is UPF0301 protein BT_1078 (Bacteroides thetaiotaomicron (strain ATCC 29148 / DSM 2079 / JCM 5827 / CCUG 10774 / NCTC 10582 / VPI-5482 / E50)).